The chain runs to 337 residues: Aspartate-semialdehyde dehydrogenase 2 (337 aa).

NADP(+) contacts are provided by residues 13 to 16 (TGAV) and 41 to 42 (RS). Position 101 (arginine 101) interacts with phosphate. The Acyl-thioester intermediate role is filled by cysteine 132. Glutamine 159 provides a ligand contact to substrate. NADP(+) is bound at residue 162–163 (SG). Phosphate is bound at residue lysine 216. Arginine 238 serves as a coordination point for substrate. Histidine 245 serves as the catalytic Proton acceptor. Position 316 (asparagine 316) interacts with NADP(+).

It belongs to the aspartate-semialdehyde dehydrogenase family. As to quaternary structure, homodimer.

It catalyses the reaction L-aspartate 4-semialdehyde + phosphate + NADP(+) = 4-phospho-L-aspartate + NADPH + H(+). It functions in the pathway amino-acid biosynthesis; L-lysine biosynthesis via DAP pathway; (S)-tetrahydrodipicolinate from L-aspartate: step 2/4. It participates in amino-acid biosynthesis; L-methionine biosynthesis via de novo pathway; L-homoserine from L-aspartate: step 2/3. The protein operates within amino-acid biosynthesis; L-threonine biosynthesis; L-threonine from L-aspartate: step 2/5. Its function is as follows. Catalyzes the NADPH-dependent formation of L-aspartate-semialdehyde (L-ASA) by the reductive dephosphorylation of L-aspartyl-4-phosphate. The sequence is that of Aspartate-semialdehyde dehydrogenase 2 (asd2) from Vibrio cholerae serotype O1 (strain ATCC 39315 / El Tor Inaba N16961).